The primary structure comprises 402 residues: Arginine deiminase (402 aa).

Cys392 serves as the catalytic Amidino-cysteine intermediate.

The protein belongs to the arginine deiminase family.

It is found in the cytoplasm. The catalysed reaction is L-arginine + H2O = L-citrulline + NH4(+). It participates in amino-acid degradation; L-arginine degradation via ADI pathway; carbamoyl phosphate from L-arginine: step 1/2. The sequence is that of Arginine deiminase from Mycolicibacterium gilvum (strain PYR-GCK) (Mycobacterium gilvum (strain PYR-GCK)).